The sequence spans 695 residues: Follicle-stimulating hormone receptor (695 aa).

An N-terminal signal peptide occupies residues 1–17 (MALLLVSLLAFMSLGSG). Cystine bridges form between Cys-18–Cys-25 and Cys-23–Cys-32. Residues 18–46 (CHHRLCHCSNRVFLCQESKVTEIPSDLPR) form the LRRNT domain. Topologically, residues 18–366 (CHHRLCHCSN…EDIMGYNILR (349 aa)) are extracellular. LRR repeat units lie at residues 49 to 72 (VELR…FGDL), 73 to 97 (EKIE…LPNL), 98 to 118 (HEIR…AFQN), 119 to 143 (LPNL…KIQS), 144 to 169 (LQKV…LGLS), 170 to 192 (SESV…AFNG), 193 to 216 (TQLD…VFQG), 217 to 240 (ASGP…GLEN), and 241 to 259 (LKKL…PSLE). N-linked (GlcNAc...) asparagine glycans are attached at residues Asn-191 and Asn-199. 4 disulfides stabilise this stretch: Cys-275-Cys-346, Cys-276-Cys-292, Cys-276-Cys-356, and Cys-292-Cys-338. N-linked (GlcNAc...) asparagine glycosylation is present at Asn-293. A Sulfotyrosine modification is found at Tyr-335. The helical transmembrane segment at 367-387 (VLIWFISILAITGNVAVLVVL) threads the bilayer. At 388–398 (TTSQYKLTVPR) the chain is on the cytoplasmic side. Residues 399 to 421 (FLMCNLAFADLCIGIYLLLIASV) form a helical membrane-spanning segment. Residues 422-443 (DVHTRTLYHNYAIDWQTGAGCA) are Extracellular-facing. A disulfide bridge links Cys-442 with Cys-517. A helical transmembrane segment spans residues 444 to 465 (DCWLFTVFASELSVYTLTAITL). The Cytoplasmic portion of the chain corresponds to 466-485 (ERWHTITHAMQLDCKVQLRH). Residues 486–508 (AASIMVIGWIFSSAAALFPIFGV) traverse the membrane as a helical segment. The Extracellular segment spans residues 509-528 (SSYMKVSICLPMDIDSPLSQ). Residues 529-550 (LYVMFLLVLNVLAFVVICGCYL) form a helical membrane-spanning segment. At 551–573 (HIYLTVRNPNIVSSASDTRIAKR) the chain is on the cytoplasmic side. A helical transmembrane segment spans residues 574-597 (MATLIFTDFLCMAPISFFAISASL). Topologically, residues 598 to 608 (KVPLITVSKAK) are extracellular. A helical transmembrane segment spans residues 609–630 (ILLVLFYPINSCANPFLYAIFT). Residues 631 to 695 (KNFRRDLFIL…LAPLNHLAQN (65 aa)) lie on the Cytoplasmic side of the membrane. Residues 658–677 (TSSTAHNSHPRNGHSSSVSR) are disordered.

This sequence belongs to the G-protein coupled receptor 1 family. FSH/LSH/TSH subfamily. In terms of assembly, homotrimer. Functions as a homotrimer binding the FSH hormone heterodimer composed of CGA and FSHB. Interacts with ARRB2. Interacts with APPL2; interaction is independent of follicle stimulating hormone stimulation. Post-translationally, N-glycosylated; indirectly required for FSH-binding, possibly via a conformational change that allows high affinity binding of hormone. Sulfated.

It localises to the cell membrane. In terms of biological role, g protein-coupled receptor for follitropin, the follicle-stimulating hormone. Through cAMP production activates the downstream PI3K-AKT and ERK1/ERK2 signaling pathways. This is Follicle-stimulating hormone receptor (FSHR) from Cavia porcellus (Guinea pig).